The following is a 455-amino-acid chain: UDP-glycosyltransferase 75B2 (455 aa).

His16 serves as the catalytic Proton acceptor. An anthocyanidin is bound at residue His16. The UDP-alpha-D-glucose site is built by Gln337, His352, Trp355, Ser357, Glu360, Asp376, and Gln377.

It belongs to the UDP-glycosyltransferase family.

The catalysed reaction is (indol-3-yl)acetate + UDP-alpha-D-glucose = 1-O-(indol-3-ylacetyl)-beta-D-glucose + UDP. Its pathway is plant hormone metabolism; auxin conjugation. Functionally, possesses low catalytic activity in vitro. Also active as glucosyltransferase in vitro on benzoates and benzoate derivatives. The polypeptide is UDP-glycosyltransferase 75B2 (UGT75B2) (Arabidopsis thaliana (Mouse-ear cress)).